Reading from the N-terminus, the 398-residue chain is Acetate kinase 2 (398 aa).

Asn7 lines the Mg(2+) pocket. Lys14 serves as a coordination point for ATP. Arg91 provides a ligand contact to substrate. Catalysis depends on Asp148, which acts as the Proton donor/acceptor. ATP contacts are provided by residues 208-212 (HLGNG), 283-285 (DFR), and 331-335 (GVGEN). Residue Glu384 coordinates Mg(2+).

Belongs to the acetokinase family. As to quaternary structure, homodimer. Requires Mg(2+) as cofactor. Mn(2+) is required as a cofactor.

The protein localises to the cytoplasm. The enzyme catalyses acetate + ATP = acetyl phosphate + ADP. It participates in metabolic intermediate biosynthesis; acetyl-CoA biosynthesis; acetyl-CoA from acetate: step 1/2. Its function is as follows. Catalyzes the formation of acetyl phosphate from acetate and ATP. Can also catalyze the reverse reaction. In Clostridium perfringens (strain 13 / Type A), this protein is Acetate kinase 2.